The following is a 126-amino-acid chain: Small ribosomal subunit protein uS13c (126 aa).

The interval 97-126 is disordered; the sequence is PLRGQRTRTNARTRRGGKKTVAGKKKAPRK. Residues 101-126 are compositionally biased toward basic residues; that stretch reads QRTRTNARTRRGGKKTVAGKKKAPRK.

This sequence belongs to the universal ribosomal protein uS13 family. In terms of assembly, part of the 30S ribosomal subunit.

It is found in the plastid. The protein resides in the chloroplast. Its function is as follows. Located at the top of the head of the 30S subunit, it contacts several helices of the 16S rRNA. This chain is Small ribosomal subunit protein uS13c, found in Pyropia yezoensis (Susabi-nori).